Here is a 276-residue protein sequence, read N- to C-terminus: NADPH-dependent 7-cyano-7-deazaguanine reductase (276 aa).

83 to 85 (IES) serves as a coordination point for substrate. An NADPH-binding site is contributed by 85–86 (SK). Residue C184 is the Thioimide intermediate of the active site. The active-site Proton donor is D191. Position 223-224 (223-224 (HE)) interacts with substrate. 252–253 (RG) is a binding site for NADPH.

Belongs to the GTP cyclohydrolase I family. QueF type 2 subfamily. As to quaternary structure, homodimer.

The protein resides in the cytoplasm. The catalysed reaction is 7-aminomethyl-7-carbaguanine + 2 NADP(+) = 7-cyano-7-deazaguanine + 2 NADPH + 3 H(+). The protein operates within tRNA modification; tRNA-queuosine biosynthesis. Catalyzes the NADPH-dependent reduction of 7-cyano-7-deazaguanine (preQ0) to 7-aminomethyl-7-deazaguanine (preQ1). The polypeptide is NADPH-dependent 7-cyano-7-deazaguanine reductase (Pseudomonas fluorescens (strain ATCC BAA-477 / NRRL B-23932 / Pf-5)).